The following is an 88-amino-acid chain: Small ribosomal subunit protein bS20 (88 aa).

Residues 1-27 (MANIPSAKKRARQAEKRRKHNQSQRSM) are disordered. Positions 7 to 22 (AKKRARQAEKRRKHNQ) are enriched in basic residues.

This sequence belongs to the bacterial ribosomal protein bS20 family.

In terms of biological role, binds directly to 16S ribosomal RNA. This chain is Small ribosomal subunit protein bS20, found in Alkalilimnicola ehrlichii (strain ATCC BAA-1101 / DSM 17681 / MLHE-1).